Consider the following 665-residue polypeptide: MTDRLKCLIWYCIDNQNYDNSIFYSERLHAIEDSNESLYLLAYSHFLNLDYNIVYDLLDRVISHVPCTYLFARTSLILGRYKQGISAVEACRSNWRSIQPNINDSISSRGHPDASCMLDVLGTMYKKAGFLKKATDCFVEAVSINPYNFSAFQNLTAIGVPLDANNVFVIPPYLTAMKGFEKSQTNATASVPEPSFLKKSKESSSSSNKFSVSESIANSYSNSSISAFTKWFDRVDASELPGSEKERHQSLKLQSQSQTSKNLLAFNDAQKADSNNRDTSLKSHFVEPRTQALRPGARLTYKLREARSSKRGESTPQSFREEDNNLMELLKLFGKGVYLLAQYKLREALNCFQSLPIEQQNTPFVLAKLGITYFELVDYEKSEEVFQKLRDLSPSRVKDMEVFSTALWHLQKSVPLSYLAHETLETNPYSPESWCILANCFSLQREHSQALKCINRAIQLDPTFEYAYTLQGHEHSANEEYEKSKTSFRKAIRVNVRHYNAWYGLGMVYLKTGRNDQADFHFQRAAEINPNNSVLITCIGMIYERCKDYKKALDFYDRACKLDEKSSLARFKKAKVLILLHDHDKALVELEQLKAIAPDEANVHFLLGKIFKQMRKKNLALKHFTIAWNLDGKATHIIKESIENLDIPEENLLTETGEIYRNLET.

One copy of the TPR 1 repeat lies at 115 to 148 (SCMLDVLGTMYKKAGFLKKATDCFVEAVSINPYN). A DNA-binding region spans residues 191 to 257 (VPEPSFLKKS…HQSLKLQSQS (67 aa)). TPR repeat units follow at residues 329–362 (LLKL…QQNT), 363–396 (PFVL…SPSR), 431–464 (PESW…DPTF), 466–498 (YAYT…NVRH), 499–532 (YNAW…NPNN), 534–566 (VLIT…DEKS), 568–600 (LARF…APDE), and 601–634 (ANVH…DGKA).

This sequence belongs to the APC3/CDC27 family. As to quaternary structure, the APC/C is composed of at least 13 subunits: apc1, apc2, nuc2, apc4, apc5, cut9, apc8, apc10, apc11, hcn1, apc13, apc14 and apc15. Interacts with apc10 and cut9.

It localises to the nucleus. Component of the anaphase-promoting complex/cyclosome (APC/C), a cell cycle-regulated E3 ubiquitin-protein ligase complex that controls progression through mitosis and the G1 phase of the cell cycle. The APC/C is thought to confer substrate specificity and, in the presence of ubiquitin-conjugating E2 enzymes, it catalyzes the formation of protein-ubiquitin conjugates that are subsequently degraded by the 26S proteasome. Interacts with spindle apparatus, chromosomes, or nuclear envelope, and interconnect nuclear and cytoskeletal functions in mitosis, so the elongation of the spindle in anaphase is blocked. The polypeptide is Anaphase-promoting complex subunit 3 (nuc2) (Schizosaccharomyces pombe (strain 972 / ATCC 24843) (Fission yeast)).